A 263-amino-acid chain; its full sequence is GTP cyclohydrolase FolE2 (263 aa).

Belongs to the GTP cyclohydrolase IV family.

The catalysed reaction is GTP + H2O = 7,8-dihydroneopterin 3'-triphosphate + formate + H(+). It functions in the pathway cofactor biosynthesis; 7,8-dihydroneopterin triphosphate biosynthesis; 7,8-dihydroneopterin triphosphate from GTP: step 1/1. In terms of biological role, converts GTP to 7,8-dihydroneopterin triphosphate. This is GTP cyclohydrolase FolE2 from Nitrosospira multiformis (strain ATCC 25196 / NCIMB 11849 / C 71).